We begin with the raw amino-acid sequence, 693 residues long: Elongation factor G (693 aa).

The 276-residue stretch at 7–282 folds into the tr-type G domain; that stretch reads EKIRNIGITA…SVIDYLPAPT (276 aa). GTP-binding positions include 16 to 23, 80 to 84, and 134 to 137; these read AHIDAGKT, DTPGH, and NKLD.

This sequence belongs to the TRAFAC class translation factor GTPase superfamily. Classic translation factor GTPase family. EF-G/EF-2 subfamily.

The protein localises to the cytoplasm. Functionally, catalyzes the GTP-dependent ribosomal translocation step during translation elongation. During this step, the ribosome changes from the pre-translocational (PRE) to the post-translocational (POST) state as the newly formed A-site-bound peptidyl-tRNA and P-site-bound deacylated tRNA move to the P and E sites, respectively. Catalyzes the coordinated movement of the two tRNA molecules, the mRNA and conformational changes in the ribosome. The polypeptide is Elongation factor G (Granulibacter bethesdensis (strain ATCC BAA-1260 / CGDNIH1)).